We begin with the raw amino-acid sequence, 156 residues long: Small ribosomal subunit protein uS7 (156 aa).

Belongs to the universal ribosomal protein uS7 family. As to quaternary structure, part of the 30S ribosomal subunit. Contacts proteins S9 and S11.

Its function is as follows. One of the primary rRNA binding proteins, it binds directly to 16S rRNA where it nucleates assembly of the head domain of the 30S subunit. Is located at the subunit interface close to the decoding center, probably blocks exit of the E-site tRNA. In Clostridium botulinum (strain 657 / Type Ba4), this protein is Small ribosomal subunit protein uS7.